A 60-amino-acid polypeptide reads, in one-letter code: Cytotoxin 1 (60 aa).

4 disulfide bridges follow: cysteine 3–cysteine 21, cysteine 14–cysteine 38, cysteine 42–cysteine 53, and cysteine 54–cysteine 59.

The protein belongs to the three-finger toxin family. Short-chain subfamily. Type IA cytotoxin sub-subfamily. In terms of assembly, monomer in solution; Homodimer and oligomer in the presence of negatively charged lipids forming a pore with a size ranging between 20 and 30 Angstroms. Expressed by the venom gland.

The protein localises to the secreted. Its subcellular location is the target cell membrane. Its function is as follows. Shows cytolytic activity on many different cells by forming pore in lipid membranes. In vivo, increases heart rate or kills the animal by cardiac arrest. In addition, it binds to heparin with high affinity, interacts with Kv channel-interacting protein 1 (KCNIP1) in a calcium-independent manner, and binds to integrin alpha-V/beta-3 (ITGAV/ITGB3) with moderate affinity. In Naja nivea (Cape cobra), this protein is Cytotoxin 1.